The sequence spans 241 residues: Sugar fermentation stimulation protein homolog (241 aa).

Belongs to the SfsA family.

The protein is Sugar fermentation stimulation protein homolog of Thermosynechococcus vestitus (strain NIES-2133 / IAM M-273 / BP-1).